The following is a 372-amino-acid chain: DNA replication and repair protein RecF (372 aa).

30-37 (GENAQGKT) contacts ATP.

This sequence belongs to the RecF family.

The protein resides in the cytoplasm. In terms of biological role, the RecF protein is involved in DNA metabolism; it is required for DNA replication and normal SOS inducibility. RecF binds preferentially to single-stranded, linear DNA. It also seems to bind ATP. The sequence is that of DNA replication and repair protein RecF from Geobacillus kaustophilus (strain HTA426).